The sequence spans 472 residues: Chromosomal replication initiator protein DnaA (472 aa).

The tract at residues 1-73 is domain I, interacts with DnaA modulators; the sequence is MSNMEQDRWS…LSCWQAELPE (73 aa). Residues 73–128 are domain II; that stretch reads EVNRVDLTVRSPVRCAAPAKEAPAPVESRRDEQRPSAERSNGATPVSANHDALGGS. Positions 89 to 124 are disordered; sequence APAKEAPAPVESRRDEQRPSAERSNGATPVSANHDA. The segment covering 99-109 has biased composition (basic and acidic residues); that stretch reads ESRRDEQRPSA. The segment covering 110 to 119 has biased composition (polar residues); that stretch reads ERSNGATPVS. The segment at 129 to 351 is domain III, AAA+ region; sequence PLDPRLTFAS…GAINRLLAHS (223 aa). 4 residues coordinate ATP: glycine 176, glycine 178, lysine 179, and threonine 180. The tract at residues 352 to 472 is domain IV, binds dsDNA; sequence KLNNQPVTLE…VESLKRQLQE (121 aa).

This sequence belongs to the DnaA family. In terms of assembly, oligomerizes as a right-handed, spiral filament on DNA at oriC.

The protein localises to the cytoplasm. In terms of biological role, plays an essential role in the initiation and regulation of chromosomal replication. ATP-DnaA binds to the origin of replication (oriC) to initiate formation of the DNA replication initiation complex once per cell cycle. Binds the DnaA box (a 9 base pair repeat at the origin) and separates the double-stranded (ds)DNA. Forms a right-handed helical filament on oriC DNA; dsDNA binds to the exterior of the filament while single-stranded (ss)DNA is stabiized in the filament's interior. The ATP-DnaA-oriC complex binds and stabilizes one strand of the AT-rich DNA unwinding element (DUE), permitting loading of DNA polymerase. After initiation quickly degrades to an ADP-DnaA complex that is not apt for DNA replication. Binds acidic phospholipids. This is Chromosomal replication initiator protein DnaA from Rhodopseudomonas palustris (strain TIE-1).